Consider the following 241-residue polypeptide: MQCFSFIKTMMILFNLLIFLCGAALLAVGIWVSIDGASFLKIFGPLSSSAMQFVNVGYFLIAAGVVVFALGFLGCYGAKTESKCALMTFFFILLLIFIAEVAAAVVALVYTTMAEHFLTLLVVPAIKKDYGSQEDFTQVWNTTMKGLKCCGFTNYTDFEDSPYLKENHAFPPFCCNDNITNTANDTCTKQKAEDQKVEGCFNQLLYDIRTNAVTVGGVAAGIGGLELAAMIVSMYLYCNLQ.

Residues 1–11 (MQCFSFIKTMM) lie on the Cytoplasmic side of the membrane. The helical transmembrane segment at 12–34 (ILFNLLIFLCGAALLAVGIWVSI) threads the bilayer. The Extracellular portion of the chain corresponds to 35-53 (DGASFLKIFGPLSSSAMQF). The helical transmembrane segment at 54–76 (VNVGYFLIAAGVVVFALGFLGCY) threads the bilayer. At 77–88 (GAKTESKCALMT) the chain is on the cytoplasmic side. Residues 89–111 (FFFILLLIFIAEVAAAVVALVYT) traverse the membrane as a helical segment. Residues 112 to 214 (TMAEHFLTLL…LYDIRTNAVT (103 aa)) are Extracellular-facing. N-linked (GlcNAc...) asparagine glycans are attached at residues Asn141, Asn154, Asn178, and Asn184. The chain crosses the membrane as a helical span at residues 215–237 (VGGVAAGIGGLELAAMIVSMYLY). At 238–241 (CNLQ) the chain is on the cytoplasmic side.

Belongs to the tetraspanin (TM4SF) family. In terms of assembly, interacts with SLC19A2. Interacts with NTRK1/TRKA.

The protein localises to the lysosome membrane. Functionally, structural component of specialized membrane microdomains known as tetraspanin-enriched microdomains (TERMs), which act as platforms for receptor clustering and signaling. Participates thereby in diverse biological functions such as cell signal transduction, adhesion, migration and protein trafficking. Regulates neuronal differentiation in response to NGF by facilitating NGF-mediated activation of NTRK1/TRKA receptor tyrosine kinase and subsequent downstream signaling pathways. Plays a role in the inhibition of TNFalpha-induced apoptosis. Mechanistically, inhibits the NF-kappa-B signaling pathway by blocking phosphorylation of CHUK. Also promotes the stability of the thiamine transporter 1/SLC19A2 in intestinal epithelial cells leading to an increase of thiamine uptake process. This Pongo abelii (Sumatran orangutan) protein is Tetraspanin-1 (TSPAN1).